Here is a 208-residue protein sequence, read N- to C-terminus: Thiamine-phosphate synthase (208 aa).

4-amino-2-methyl-5-(diphosphooxymethyl)pyrimidine contacts are provided by residues 38-42 (QYRSK) and Asn-70. Mg(2+) contacts are provided by Asp-71 and Asp-90. Thr-109 is a binding site for 4-amino-2-methyl-5-(diphosphooxymethyl)pyrimidine. 136-138 (SAT) serves as a coordination point for 2-[(2R,5Z)-2-carboxy-4-methylthiazol-5(2H)-ylidene]ethyl phosphate. Lys-139 provides a ligand contact to 4-amino-2-methyl-5-(diphosphooxymethyl)pyrimidine. 2-[(2R,5Z)-2-carboxy-4-methylthiazol-5(2H)-ylidene]ethyl phosphate-binding positions include Gly-166 and 186 to 187 (VS).

It belongs to the thiamine-phosphate synthase family. Mg(2+) serves as cofactor.

The enzyme catalyses 2-[(2R,5Z)-2-carboxy-4-methylthiazol-5(2H)-ylidene]ethyl phosphate + 4-amino-2-methyl-5-(diphosphooxymethyl)pyrimidine + 2 H(+) = thiamine phosphate + CO2 + diphosphate. It catalyses the reaction 2-(2-carboxy-4-methylthiazol-5-yl)ethyl phosphate + 4-amino-2-methyl-5-(diphosphooxymethyl)pyrimidine + 2 H(+) = thiamine phosphate + CO2 + diphosphate. The catalysed reaction is 4-methyl-5-(2-phosphooxyethyl)-thiazole + 4-amino-2-methyl-5-(diphosphooxymethyl)pyrimidine + H(+) = thiamine phosphate + diphosphate. Its pathway is cofactor biosynthesis; thiamine diphosphate biosynthesis; thiamine phosphate from 4-amino-2-methyl-5-diphosphomethylpyrimidine and 4-methyl-5-(2-phosphoethyl)-thiazole: step 1/1. Its function is as follows. Condenses 4-methyl-5-(beta-hydroxyethyl)thiazole monophosphate (THZ-P) and 2-methyl-4-amino-5-hydroxymethyl pyrimidine pyrophosphate (HMP-PP) to form thiamine monophosphate (TMP). This Aromatoleum aromaticum (strain DSM 19018 / LMG 30748 / EbN1) (Azoarcus sp. (strain EbN1)) protein is Thiamine-phosphate synthase.